A 433-amino-acid chain; its full sequence is uncharacterized protein (433 aa).

This sequence belongs to the arrestin family.

This is an uncharacterized protein from Schizosaccharomyces pombe (strain 972 / ATCC 24843) (Fission yeast).